The chain runs to 400 residues: Dual specificity mitogen-activated protein kinase kinase 2 (400 aa).

N-acetylmethionine is present on methionine 1. Residue serine 23 is modified to Phosphoserine. Positions 72–369 constitute a Protein kinase domain; the sequence is FERISELGAG…LKMLTNHTFI (298 aa). ATP contacts are provided by residues 78-86 and lysine 101; that span reads LGAGNGGVV. Residue aspartate 194 is the Proton acceptor of the active site. A (Microbial infection) O-acetylserine; by Yersinia YopJ; alternate mark is found at serine 222 and serine 226. A Phosphoserine; by RAF; alternate modification is found at serine 222. At serine 226 the chain carries Phosphoserine; alternate. Residues 286 to 310 form a disordered region; the sequence is GEEGEPHSISPRPRPPGRPVSGHGM. Serine 293, serine 295, and serine 306 each carry phosphoserine. Phosphothreonine occurs at positions 394 and 396.

The protein belongs to the protein kinase superfamily. STE Ser/Thr protein kinase family. MAP kinase kinase subfamily. As to quaternary structure, interacts with MORG1. Interacts with SGK1. Interacts with KSR1. Interacts with KSR1 and BRAF; the interaction with KSR1 mediates KSR1-BRAF dimerization. Interacts with GLS. Mg(2+) serves as cofactor. In terms of processing, MAPKK is itself dependent on Ser/Thr phosphorylation for activity catalyzed by MAP kinase kinase kinases (RAF or MEKK1). Phosphorylated by MAP2K1/MEK1. Post-translationally, (Microbial infection) Acetylation of Ser-222 and Ser-226 by Yersinia YopJ prevents phosphorylation and activation, thus blocking the MAPK signaling pathway.

The protein localises to the cytoplasm. It localises to the membrane. It catalyses the reaction L-seryl-[protein] + ATP = O-phospho-L-seryl-[protein] + ADP + H(+). It carries out the reaction L-threonyl-[protein] + ATP = O-phospho-L-threonyl-[protein] + ADP + H(+). The catalysed reaction is L-tyrosyl-[protein] + ATP = O-phospho-L-tyrosyl-[protein] + ADP + H(+). Functionally, catalyzes the concomitant phosphorylation of a threonine and a tyrosine residue in a Thr-Glu-Tyr sequence located in MAP kinases. Activates the ERK1 and ERK2 MAP kinases. Activates BRAF in a KSR1 or KSR2-dependent manner; by binding to KSR1 or KSR2 releases the inhibitory intramolecular interaction between KSR1 or KSR2 protein kinase and N-terminal domains which promotes KSR1 or KSR2-BRAF dimerization and BRAF activation. The protein is Dual specificity mitogen-activated protein kinase kinase 2 (MAP2K2) of Homo sapiens (Human).